We begin with the raw amino-acid sequence, 65 residues long: Gallinacin-12 (65 aa).

The signal sequence occupies residues 1–19 (MRNLCFVFIFISLLAHGST). Disulfide bonds link cysteine 25/cysteine 54, cysteine 32/cysteine 47, and cysteine 37/cysteine 55.

It belongs to the beta-defensin family. Expressed in the large intestine, kidney liver, gall bladder, testis, ovary and male and female reproductive tracts. Expressed in the ovarian stroma and the theca and granulosa layers of the ovarian follicle.

The protein localises to the secreted. The protein resides in the cytoplasmic granule. Its function is as follows. Has bactericidal activity. The protein is Gallinacin-12 (GAL12) of Gallus gallus (Chicken).